The sequence spans 420 residues: Methionine aminopeptidase 2 (420 aa).

Positions 1–48 (MSDAIAKDAVNTSSEKEPVSATPELKTSGSPDAAVSSGDKKKKKKKKK) are disordered. Position 172 (His172) interacts with substrate. 3 residues coordinate a divalent metal cation: Asp192, Asp203, and His272. Position 280 (His280) interacts with substrate. A divalent metal cation is bound by residues Glu305 and Glu401.

The protein belongs to the peptidase M24A family. Methionine aminopeptidase eukaryotic type 2 subfamily. It depends on Co(2+) as a cofactor. The cofactor is Zn(2+). Mn(2+) is required as a cofactor. Requires Fe(2+) as cofactor.

Its subcellular location is the cytoplasm. It carries out the reaction Release of N-terminal amino acids, preferentially methionine, from peptides and arylamides.. In terms of biological role, cotranslationally removes the N-terminal methionine from nascent proteins. The N-terminal methionine is often cleaved when the second residue in the primary sequence is small and uncharged (Met-Ala-, Cys, Gly, Pro, Ser, Thr, or Val). This Lachancea thermotolerans (strain ATCC 56472 / CBS 6340 / NRRL Y-8284) (Yeast) protein is Methionine aminopeptidase 2.